The sequence spans 233 residues: tRNA (guanine-N(7)-)-methyltransferase (233 aa).

Residues glutamate 62, glutamate 87, aspartate 114, and aspartate 136 each coordinate S-adenosyl-L-methionine. Aspartate 136 is an active-site residue. Substrate-binding positions include lysine 140, aspartate 172, and 211–214 (TRYE).

Belongs to the class I-like SAM-binding methyltransferase superfamily. TrmB family.

It catalyses the reaction guanosine(46) in tRNA + S-adenosyl-L-methionine = N(7)-methylguanosine(46) in tRNA + S-adenosyl-L-homocysteine. It functions in the pathway tRNA modification; N(7)-methylguanine-tRNA biosynthesis. Functionally, catalyzes the formation of N(7)-methylguanine at position 46 (m7G46) in tRNA. The protein is tRNA (guanine-N(7)-)-methyltransferase of Erythrobacter litoralis (strain HTCC2594).